The chain runs to 132 residues: Rubredoxin-1 (132 aa).

One can recognise a Rubredoxin-like domain in the interval 1–53 (MSRYQCPDCQYIYDENKGEPHEGFHPNTSWNDIPKDWACPDCAVRDKVDFIFL). Fe cation-binding residues include Cys6, Cys9, Cys39, and Cys42. The segment at 108-132 (TEVLDQASTPQVVRKSSTRKKMRNK) is disordered. The segment covering 113-122 (QASTPQVVRK) has biased composition (polar residues). Positions 123-132 (SSTRKKMRNK) are enriched in basic residues.

Belongs to the rubredoxin family. The cofactor is Fe(3+).

Its subcellular location is the cytoplasm. The protein operates within hydrocarbon metabolism; alkane degradation. Not known. Probably involved in an electron transport pathway, but not required for the hydrocarbon hydroxylating system. Seems to be non-functional. The polypeptide is Rubredoxin-1 (alkF) (Ectopseudomonas oleovorans (Pseudomonas oleovorans)).